The primary structure comprises 232 residues: Uracil-DNA glycosylase (232 aa).

Asp-70 (proton acceptor) is an active-site residue.

This sequence belongs to the uracil-DNA glycosylase (UDG) superfamily. UNG family.

It is found in the cytoplasm. It carries out the reaction Hydrolyzes single-stranded DNA or mismatched double-stranded DNA and polynucleotides, releasing free uracil.. In terms of biological role, excises uracil residues from the DNA which can arise as a result of misincorporation of dUMP residues by DNA polymerase or due to deamination of cytosine. The protein is Uracil-DNA glycosylase of Campylobacter fetus subsp. fetus (strain 82-40).